The chain runs to 270 residues: UPF0162 protein PA3419 (270 aa).

The protein belongs to the UPF0162 family.

The chain is UPF0162 protein PA3419 from Pseudomonas aeruginosa (strain ATCC 15692 / DSM 22644 / CIP 104116 / JCM 14847 / LMG 12228 / 1C / PRS 101 / PAO1).